A 176-amino-acid chain; its full sequence is Translation initiation factor IF-3 (176 aa).

Belongs to the IF-3 family. Monomer.

Its subcellular location is the cytoplasm. Its function is as follows. IF-3 binds to the 30S ribosomal subunit and shifts the equilibrium between 70S ribosomes and their 50S and 30S subunits in favor of the free subunits, thus enhancing the availability of 30S subunits on which protein synthesis initiation begins. The chain is Translation initiation factor IF-3 from Streptococcus uberis (strain ATCC BAA-854 / 0140J).